The following is a 261-amino-acid chain: Ribonuclease PH (261 aa).

Residues Arg-88 and 126-128 (GTR) each bind phosphate. The segment at 242–261 (PYPGVLPEPKNPEPKKKFGA) is disordered. Basic and acidic residues predominate over residues 251–261 (KNPEPKKKFGA).

The protein belongs to the RNase PH family. Homohexameric ring arranged as a trimer of dimers.

The enzyme catalyses tRNA(n+1) + phosphate = tRNA(n) + a ribonucleoside 5'-diphosphate. Functionally, phosphorolytic 3'-5' exoribonuclease that plays an important role in tRNA 3'-end maturation. Removes nucleotide residues following the 3'-CCA terminus of tRNAs; can also add nucleotides to the ends of RNA molecules by using nucleoside diphosphates as substrates, but this may not be physiologically important. Probably plays a role in initiation of 16S rRNA degradation (leading to ribosome degradation) during starvation. This Rhodococcus erythropolis (strain PR4 / NBRC 100887) protein is Ribonuclease PH.